The chain runs to 338 residues: Lipoate-protein ligase A (338 aa).

The BPL/LPL catalytic domain maps to 29–216; sequence PATQRVLFLW…AFFAHYGERV (188 aa). ATP is bound by residues Arg71, 76–79, and Lys134; that span reads GAVF. Lys134 is a (R)-lipoate binding site.

Belongs to the LplA family. In terms of assembly, monomer.

The protein localises to the cytoplasm. It carries out the reaction L-lysyl-[lipoyl-carrier protein] + (R)-lipoate + ATP = N(6)-[(R)-lipoyl]-L-lysyl-[lipoyl-carrier protein] + AMP + diphosphate + H(+). Its pathway is protein modification; protein lipoylation via exogenous pathway; protein N(6)-(lipoyl)lysine from lipoate: step 1/2. The protein operates within protein modification; protein lipoylation via exogenous pathway; protein N(6)-(lipoyl)lysine from lipoate: step 2/2. Catalyzes both the ATP-dependent activation of exogenously supplied lipoate to lipoyl-AMP and the transfer of the activated lipoyl onto the lipoyl domains of lipoate-dependent enzymes. The polypeptide is Lipoate-protein ligase A (Escherichia coli (strain 55989 / EAEC)).